A 485-amino-acid polypeptide reads, in one-letter code: ATP synthase subunit beta (485 aa).

Residues Met-1–Thr-11 are compositionally biased toward basic and acidic residues. The tract at residues Met-1–Gly-20 is disordered. Gly-170–Thr-177 provides a ligand contact to ATP.

This sequence belongs to the ATPase alpha/beta chains family. As to quaternary structure, F-type ATPases have 2 components, CF(1) - the catalytic core - and CF(0) - the membrane proton channel. CF(1) has five subunits: alpha(3), beta(3), gamma(1), delta(1), epsilon(1). CF(0) has three main subunits: a(1), b(2) and c(9-12). The alpha and beta chains form an alternating ring which encloses part of the gamma chain. CF(1) is attached to CF(0) by a central stalk formed by the gamma and epsilon chains, while a peripheral stalk is formed by the delta and b chains.

It localises to the cell membrane. The catalysed reaction is ATP + H2O + 4 H(+)(in) = ADP + phosphate + 5 H(+)(out). Its function is as follows. Produces ATP from ADP in the presence of a proton gradient across the membrane. The catalytic sites are hosted primarily by the beta subunits. This is ATP synthase subunit beta from Mycobacterium avium (strain 104).